A 327-amino-acid chain; its full sequence is Ribose-phosphate pyrophosphokinase (327 aa).

51–53 is a binding site for ATP; that stretch reads DGE. Mg(2+) is bound by residues His-144 and Asp-183. Lys-207 is a catalytic residue. D-ribose 5-phosphate-binding positions include Arg-209, Asp-233, and 237–241; that span reads DTGGT.

Belongs to the ribose-phosphate pyrophosphokinase family. Class I subfamily. In terms of assembly, homohexamer. It depends on Mg(2+) as a cofactor.

Its subcellular location is the cytoplasm. The enzyme catalyses D-ribose 5-phosphate + ATP = 5-phospho-alpha-D-ribose 1-diphosphate + AMP + H(+). It participates in metabolic intermediate biosynthesis; 5-phospho-alpha-D-ribose 1-diphosphate biosynthesis; 5-phospho-alpha-D-ribose 1-diphosphate from D-ribose 5-phosphate (route I): step 1/1. Functionally, involved in the biosynthesis of the central metabolite phospho-alpha-D-ribosyl-1-pyrophosphate (PRPP) via the transfer of pyrophosphoryl group from ATP to 1-hydroxyl of ribose-5-phosphate (Rib-5-P). The sequence is that of Ribose-phosphate pyrophosphokinase from Prochlorococcus marinus (strain SARG / CCMP1375 / SS120).